The primary structure comprises 500 residues: Probable malate:quinone oxidoreductase (500 aa).

The protein belongs to the MQO family. FAD is required as a cofactor.

The catalysed reaction is (S)-malate + a quinone = a quinol + oxaloacetate. The protein operates within carbohydrate metabolism; tricarboxylic acid cycle; oxaloacetate from (S)-malate (quinone route): step 1/1. The protein is Probable malate:quinone oxidoreductase of Bacillus thuringiensis (strain Al Hakam).